A 715-amino-acid polypeptide reads, in one-letter code: Glycine--tRNA ligase beta subunit (715 aa).

This sequence belongs to the class-II aminoacyl-tRNA synthetase family. In terms of assembly, tetramer of two alpha and two beta subunits.

Its subcellular location is the cytoplasm. It catalyses the reaction tRNA(Gly) + glycine + ATP = glycyl-tRNA(Gly) + AMP + diphosphate. This is Glycine--tRNA ligase beta subunit from Nitrosomonas europaea (strain ATCC 19718 / CIP 103999 / KCTC 2705 / NBRC 14298).